The chain runs to 201 residues: Ribosomal RNA large subunit methyltransferase E (201 aa).

S-adenosyl-L-methionine is bound by residues Gly-49, Trp-51, Asp-69, Asp-87, and Asp-111. Lys-151 acts as the Proton acceptor in catalysis.

Belongs to the class I-like SAM-binding methyltransferase superfamily. RNA methyltransferase RlmE family.

It localises to the cytoplasm. It carries out the reaction uridine(2552) in 23S rRNA + S-adenosyl-L-methionine = 2'-O-methyluridine(2552) in 23S rRNA + S-adenosyl-L-homocysteine + H(+). Specifically methylates the uridine in position 2552 of 23S rRNA at the 2'-O position of the ribose in the fully assembled 50S ribosomal subunit. The protein is Ribosomal RNA large subunit methyltransferase E of Nitratidesulfovibrio vulgaris (strain DSM 19637 / Miyazaki F) (Desulfovibrio vulgaris).